A 600-amino-acid polypeptide reads, in one-letter code: Methionine--tRNA ligase (600 aa).

The short motif at 12–22 (PYANGPRHIGH) is the 'HIGH' region element. Zn(2+) contacts are provided by Cys-144, Cys-147, Cys-157, and Cys-160. The 'KMSKS' region signature appears at 351–355 (KFSSS). Ser-354 provides a ligand contact to ATP.

The protein belongs to the class-I aminoacyl-tRNA synthetase family. MetG type 1 subfamily. In terms of assembly, monomer. Zn(2+) is required as a cofactor.

It localises to the cytoplasm. It carries out the reaction tRNA(Met) + L-methionine + ATP = L-methionyl-tRNA(Met) + AMP + diphosphate. In terms of biological role, is required not only for elongation of protein synthesis but also for the initiation of all mRNA translation through initiator tRNA(fMet) aminoacylation. This Chloroflexus aggregans (strain MD-66 / DSM 9485) protein is Methionine--tRNA ligase.